The chain runs to 214 residues: Thiamine-phosphate synthase (214 aa).

Residues 37–41 and Asn-73 contribute to the 4-amino-2-methyl-5-(diphosphooxymethyl)pyrimidine site; that span reads QYREK. Mg(2+) is bound by residues Asp-74 and Asp-93. A 4-amino-2-methyl-5-(diphosphooxymethyl)pyrimidine-binding site is contributed by Ser-112. Residue 139–141 coordinates 2-[(2R,5Z)-2-carboxy-4-methylthiazol-5(2H)-ylidene]ethyl phosphate; the sequence is TIS. Lys-142 serves as a coordination point for 4-amino-2-methyl-5-(diphosphooxymethyl)pyrimidine. Residues Gly-171 and 191-192 each bind 2-[(2R,5Z)-2-carboxy-4-methylthiazol-5(2H)-ylidene]ethyl phosphate; that span reads IS.

The protein belongs to the thiamine-phosphate synthase family. It depends on Mg(2+) as a cofactor.

The enzyme catalyses 2-[(2R,5Z)-2-carboxy-4-methylthiazol-5(2H)-ylidene]ethyl phosphate + 4-amino-2-methyl-5-(diphosphooxymethyl)pyrimidine + 2 H(+) = thiamine phosphate + CO2 + diphosphate. It catalyses the reaction 2-(2-carboxy-4-methylthiazol-5-yl)ethyl phosphate + 4-amino-2-methyl-5-(diphosphooxymethyl)pyrimidine + 2 H(+) = thiamine phosphate + CO2 + diphosphate. The catalysed reaction is 4-methyl-5-(2-phosphooxyethyl)-thiazole + 4-amino-2-methyl-5-(diphosphooxymethyl)pyrimidine + H(+) = thiamine phosphate + diphosphate. The protein operates within cofactor biosynthesis; thiamine diphosphate biosynthesis; thiamine phosphate from 4-amino-2-methyl-5-diphosphomethylpyrimidine and 4-methyl-5-(2-phosphoethyl)-thiazole: step 1/1. Functionally, condenses 4-methyl-5-(beta-hydroxyethyl)thiazole monophosphate (THZ-P) and 2-methyl-4-amino-5-hydroxymethyl pyrimidine pyrophosphate (HMP-PP) to form thiamine monophosphate (TMP). This is Thiamine-phosphate synthase from Listeria monocytogenes serotype 4a (strain HCC23).